Consider the following 752-residue polypeptide: MTISPPEREEKKARVIVDKDPVPTSFEKWAQPGHFDRTLARGPKTTTWIWNLHALAHDFDTHTSDLEDISRKIFAAHFGHLAVVTIWLSGMIFHGAKFSNYEAWLSDPLNVRPSAQVVWPIVGQDILNGDVGGGFHGIQITSGLFQVWRGWGITNSFQLYCTAIGGLVLAGLFLFAGWFHYHKRAPKLEWFQNVESMLNHHLQVLLGCGSLGWAGHLIHVSAPINKLLDAGVAVKDIPLPHEFILNKSVLIDLFPGFAAGLTPFFTLNWGQYADFLTFKGGLNPVTGGLWLTDISHHHLAIAVLFIIAGHQYRTNWGIGHSIKEILENHKGPFTGEGHKGLYENLTTSWHAQLATNLAFLGSLTIIIAHHMYAMPPYPYLATDYATQLCIFTHHIWIGGFLIVGGAAHAAIFMVRDYDPVVNQNNVLDRVIRHRDAIISHLNWVCIFLGFHSFGLYIHNDTMRALGRPQDMFSDTAIQLQPVFAQWVQNLHTLAPGGTAPNALEPVSYAFGGGVLAVGGKVAMMPIALGTADFLIHHIHAFTIHVTVLILLKGVLFARSSRLIPDKANLGFRFPCDGPGRGGTCQVSGWDHVFLGLFWMYNSLSIVIFHFSWKMQSDVWGTVDAAGNVSHITGGNFAQSAITINGWLRDFLWAQASQVINSYGSALSAYGLMFLGAHFVWAFSLMFLFSGRGYWQELIESIVWAHNKLKVAPAIQPRALSITQGRAVGVAHYLLGGIATTWAFFHAHILSVG.

A run of 8 helical transmembrane segments spans residues 73 to 96 (IFAAHFGHLAVVTIWLSGMIFHGA), 159 to 182 (LYCTAIGGLVLAGLFLFAGWFHYH), 198 to 222 (LNHHLQVLLGCGSLGWAGHLIHVSA), 294 to 312 (ISHHHLAIAVLFIIAGHQY), 349 to 372 (WHAQLATNLAFLGSLTIIIAHHMY), 388 to 414 (LCIFTHHIWIGGFLIVGGAAHAAIFMV), 436 to 458 (AIISHLNWVCIFLGFHSFGLYIH), and 533 to 551 (FLIHHIHAFTIHVTVLILL). Residues cysteine 575 and cysteine 584 each contribute to the [4Fe-4S] cluster site. The next 2 helical transmembrane spans lie at 591–612 (HVFLGLFWMYNSLSIVIFHFSW) and 666–688 (LSAYGLMFLGAHFVWAFSLMFLF). Chlorophyll a' is bound at residue histidine 677. Residues methionine 685 and tyrosine 693 each contribute to the chlorophyll a site. Residue tryptophan 694 participates in phylloquinone binding. A helical transmembrane segment spans residues 726–746 (AVGVAHYLLGGIATTWAFFHA).

The protein belongs to the PsaA/PsaB family. As to quaternary structure, the PsaA/B heterodimer binds the P700 chlorophyll special pair and subsequent electron acceptors. PSI consists of a core antenna complex that captures photons, and an electron transfer chain that converts photonic excitation into a charge separation. The cyanobacterial PSI reaction center is composed of one copy each of PsaA,B,C,D,E,F,I,J,K,L,M and X, and forms trimeric complexes. It depends on PSI electron transfer chain: 5 chlorophyll a, 1 chlorophyll a', 2 phylloquinones and 3 4Fe-4S clusters. PSI core antenna: 90 chlorophyll a, 22 carotenoids, 3 phospholipids and 1 galactolipid. P700 is a chlorophyll a/chlorophyll a' dimer, A0 is one or more chlorophyll a, A1 is one or both phylloquinones and FX is a shared 4Fe-4S iron-sulfur center. as a cofactor. In terms of processing, the N-terminus is blocked.

It localises to the cellular thylakoid membrane. The catalysed reaction is reduced [plastocyanin] + hnu + oxidized [2Fe-2S]-[ferredoxin] = oxidized [plastocyanin] + reduced [2Fe-2S]-[ferredoxin]. In terms of biological role, psaA and PsaB bind P700, the primary electron donor of photosystem I (PSI), as well as the electron acceptors A0, A1 and FX. PSI is a plastocyanin/cytochrome c6-ferredoxin oxidoreductase, converting photonic excitation into a charge separation, which transfers an electron from the donor P700 chlorophyll pair to the spectroscopically characterized acceptors A0, A1, FX, FA and FB in turn. Oxidized P700 is reduced on the lumenal side of the thylakoid membrane by plastocyanin or cytochrome c6. In Trichormus variabilis (strain ATCC 29413 / PCC 7937) (Anabaena variabilis), this protein is Photosystem I P700 chlorophyll a apoprotein A1 (psaA).